Reading from the N-terminus, the 231-residue chain is NADH-ubiquinone oxidoreductase chain 4 (231 aa).

The next 6 membrane-spanning stretches (helical) occupy residues 1–21 (PIAG…YGMI), 34–54 (MFMP…LTCL), 63–85 (IAYS…TPWG), 89–111 (AMAL…NTTY), 128–148 (ILPM…AIPP), and 156–176 (FLIM…LGLS).

This sequence belongs to the complex I subunit 4 family.

Its subcellular location is the mitochondrion membrane. The enzyme catalyses a ubiquinone + NADH + 5 H(+)(in) = a ubiquinol + NAD(+) + 4 H(+)(out). Core subunit of the mitochondrial membrane respiratory chain NADH dehydrogenase (Complex I) that is believed to belong to the minimal assembly required for catalysis. Complex I functions in the transfer of electrons from NADH to the respiratory chain. The immediate electron acceptor for the enzyme is believed to be ubiquinone. The chain is NADH-ubiquinone oxidoreductase chain 4 (MT-ND4) from Bothriechis schlegelii (Eyelash palm pitviper).